We begin with the raw amino-acid sequence, 636 residues long: Leucine-rich repeat and fibronectin type-III domain-containing protein 4 (636 aa).

The first 16 residues, 1–16, serve as a signal peptide directing secretion; it reads MAPPLLLLLLASGAAA. The 32-residue stretch at 17–48 folds into the LRRNT domain; sequence CPLPCVCQNLSESLSTLCAHRGLLFVPPNVDR. Topologically, residues 17–518 are extracellular; sequence CPLPCVCQNL…LQAHVLGGTL (502 aa). N-linked (GlcNAc...) asparagine glycans are attached at residues Asn-25 and Asn-70. LRR repeat units follow at residues 49-70, 73-94, 97-118, 121-142, 146-169, 170-191, and 194-215; these read RTVE…DFRN, GLVD…SFGD, SLRS…SLRG, NLQH…AFDD, SLED…GSMP, ALHT…VFAQ, and QLSR…PLFS. The LRRCT domain occupies 234-280; the sequence is NPLHCNCELLWLRRLARPDDLETCASPPTLAGRYFWAVPEGEFSCEP. Positions 281 to 367 constitute an Ig-like domain; sequence PLIARHTQRL…GEATARVELR (87 aa). A disulfide bridge connects residues Cys-302 and Cys-351. Residues Asn-324, Asn-333, Asn-376, and Asn-440 are each glycosylated (N-linked (GlcNAc...) asparagine). One can recognise a Fibronectin type-III domain in the interval 405-502; sequence SEPAVQVTEV…GCAHFSTLPA (98 aa). Residues 519-539 form a helical membrane-spanning segment; that stretch reads TVAVGGVLVAALLVFTVALLV. Over 540–636 the chain is Cytoplasmic; it reads RGRGAGNGRL…SAERLEESVV (97 aa). The interval 556–585 is disordered; sequence VQSQTNGGTSPMPKSHPPRSPPPRPQRSCS. Positions 569–580 are enriched in pro residues; the sequence is KSHPPRSPPPRP. Phosphoserine occurs at positions 585 and 627. Positions 633 to 636 match the PDZ-binding motif; the sequence is ESVV.

This sequence belongs to the LRFN family. Can form heteromeric complexes with LRFN1, LRFN2, LRFN3 and LRFN5. Unable to form homophilic interactions across cell junctions. Interacts with DLG1, DLG2 and DLG3. Also interacts with DLG4. Glycosylated. Expressed in brain and testis. In the brain, weak, but broad expression in the cerebral cortex and diencephalic nuclei. Also detected in other parts of the central nervous system, including the olfactory bulb, pons, cerebellum, and medulla oblongata, as well as in the peripheral nervous system, such as the ganglia of cranial nerves and the dorsal root ganglion during gestation.

It is found in the membrane. Promotes neurite outgrowth in hippocampal neurons. May play a role in redistributing DLG4 to the cell periphery. The polypeptide is Leucine-rich repeat and fibronectin type-III domain-containing protein 4 (Lrfn4) (Mus musculus (Mouse)).